We begin with the raw amino-acid sequence, 247 residues long: Eukaryotic translation initiation factor 6 (247 aa).

Phosphoserine; by CK1 occurs at positions 174 and 175.

It belongs to the eIF-6 family. Monomer. Associates with the 60S ribosomal subunit. In terms of processing, phosphorylation at Ser-174 and Ser-175 promotes nuclear export.

Its subcellular location is the cytoplasm. The protein localises to the nucleus. It is found in the nucleolus. In terms of biological role, binds to the 60S ribosomal subunit and prevents its association with the 40S ribosomal subunit to form the 80S initiation complex in the cytoplasm. Is also involved in ribosome biogenesis. Associates with pre-60S subunits in the nucleus and is involved in its nuclear export. The protein is Eukaryotic translation initiation factor 6 (tif6) of Emericella nidulans (strain FGSC A4 / ATCC 38163 / CBS 112.46 / NRRL 194 / M139) (Aspergillus nidulans).